The primary structure comprises 47 residues: Lysis protein for colicin E7 (47 aa).

Positions 1–19 (MKKITGIILLLLAAIILAA) are cleaved as a signal peptide. Cys-20 carries the N-palmitoyl cysteine lipid modification. Residue Cys-20 is the site of S-diacylglycerol cysteine attachment.

The protein localises to the cell outer membrane. Functionally, lysis proteins are required for both colicin release and partial cell lysis. In Escherichia coli, this protein is Lysis protein for colicin E7 (lys).